A 368-amino-acid polypeptide reads, in one-letter code: Phospho-N-acetylmuramoyl-pentapeptide-transferase (368 aa).

Helical transmembrane passes span 34–54 (GAVVTGALFVFLFGPWIIDHL), 79–99 (TPTMGGLMILSGLVVSTVLWA), 102–122 (LNPYVWIVLAVTLGFGFVGFY), 140–160 (ARILIEAGIALVACYALVRLG), 176–196 (LVIKFGWMYVIFGAFVIVGAG), 207–227 (GLAIVPVMIASASFGLIAYLA), 247–267 (LAVLCGAVLGAGLGFLWFNAP), 271–291 (IFMGDTGSLALGGMLGSIAVA), 296–316 (IVLAVIGGLFVLEAVSVIVQV), and 345–365 (QIVIRFWIISVMLALVGLSTL).

It belongs to the glycosyltransferase 4 family. MraY subfamily. It depends on Mg(2+) as a cofactor.

The protein localises to the cell inner membrane. The enzyme catalyses UDP-N-acetyl-alpha-D-muramoyl-L-alanyl-gamma-D-glutamyl-meso-2,6-diaminopimeloyl-D-alanyl-D-alanine + di-trans,octa-cis-undecaprenyl phosphate = di-trans,octa-cis-undecaprenyl diphospho-N-acetyl-alpha-D-muramoyl-L-alanyl-D-glutamyl-meso-2,6-diaminopimeloyl-D-alanyl-D-alanine + UMP. The protein operates within cell wall biogenesis; peptidoglycan biosynthesis. Catalyzes the initial step of the lipid cycle reactions in the biosynthesis of the cell wall peptidoglycan: transfers peptidoglycan precursor phospho-MurNAc-pentapeptide from UDP-MurNAc-pentapeptide onto the lipid carrier undecaprenyl phosphate, yielding undecaprenyl-pyrophosphoryl-MurNAc-pentapeptide, known as lipid I. In Bradyrhizobium sp. (strain BTAi1 / ATCC BAA-1182), this protein is Phospho-N-acetylmuramoyl-pentapeptide-transferase.